We begin with the raw amino-acid sequence, 399 residues long: Formate-dependent phosphoribosylglycinamide formyltransferase (399 aa).

N(1)-(5-phospho-beta-D-ribosyl)glycinamide contacts are provided by residues 8-9 and Glu68; that span reads EL. ATP is bound by residues Arg100, Lys141, 146–151, 185–188, and Glu193; these read SSGHGQ and EALA. An ATP-grasp domain is found at 105–308; it reads VLAHEELGLP…EFALHARAIL (204 aa). Residues Glu266 and Glu279 each contribute to the Mg(2+) site. Residues Asp286, Lys361, and 368-369 contribute to the N(1)-(5-phospho-beta-D-ribosyl)glycinamide site; that span reads RR.

The protein belongs to the PurK/PurT family. As to quaternary structure, homodimer.

The enzyme catalyses N(1)-(5-phospho-beta-D-ribosyl)glycinamide + formate + ATP = N(2)-formyl-N(1)-(5-phospho-beta-D-ribosyl)glycinamide + ADP + phosphate + H(+). The protein operates within purine metabolism; IMP biosynthesis via de novo pathway; N(2)-formyl-N(1)-(5-phospho-D-ribosyl)glycinamide from N(1)-(5-phospho-D-ribosyl)glycinamide (formate route): step 1/1. In terms of biological role, involved in the de novo purine biosynthesis. Catalyzes the transfer of formate to 5-phospho-ribosyl-glycinamide (GAR), producing 5-phospho-ribosyl-N-formylglycinamide (FGAR). Formate is provided by PurU via hydrolysis of 10-formyl-tetrahydrofolate. The chain is Formate-dependent phosphoribosylglycinamide formyltransferase from Bifidobacterium adolescentis (strain ATCC 15703 / DSM 20083 / NCTC 11814 / E194a).